A 344-amino-acid chain; its full sequence is Protein BIM1 (344 aa).

Ser-2 carries the post-translational modification N-acetylserine. The 102-residue stretch at 6–107 (GESRTELLTW…FLQWLKKHWI (102 aa)) folds into the Calponin-homology (CH) domain. The tract at residues 126–173 (IITNNSATKPRTVSNPTTAKRSSSTGTGSAMSGGLATRHSSLGINGSR) is disordered. Residues 127–146 (ITNNSATKPRTVSNPTTAKR) show a composition bias toward polar residues. The segment covering 147–159 (SSSTGTGSAMSGG) has biased composition (low complexity). Ser-157 carries the phosphoserine modification. Residues 163–173 (RHSSLGINGSR) show a composition bias toward polar residues. Residues 188–281 (ELTKSQETIG…LYATAEGFEM (94 aa)) form the EB1 C-terminal domain. Residues 292–312 (NLGEHGTVPNQGGYANSNGEV) form a disordered region.

It belongs to the MAPRE family.

The protein resides in the cytoplasm. It is found in the cytoskeleton. In terms of biological role, binds microtubules. This Saccharomyces cerevisiae (strain ATCC 204508 / S288c) (Baker's yeast) protein is Protein BIM1 (BIM1).